The chain runs to 101 residues: Small ribosomal subunit protein uS14 (101 aa).

It belongs to the universal ribosomal protein uS14 family. In terms of assembly, part of the 30S ribosomal subunit. Contacts proteins S3 and S10.

Functionally, binds 16S rRNA, required for the assembly of 30S particles and may also be responsible for determining the conformation of the 16S rRNA at the A site. The chain is Small ribosomal subunit protein uS14 from Neorickettsia sennetsu (strain ATCC VR-367 / Miyayama) (Ehrlichia sennetsu).